We begin with the raw amino-acid sequence, 227 residues long: Enolase-phosphatase E1 (227 aa).

The protein belongs to the HAD-like hydrolase superfamily. MasA/MtnC family. As to quaternary structure, monomer. Requires Mg(2+) as cofactor.

It catalyses the reaction 5-methylsulfanyl-2,3-dioxopentyl phosphate + H2O = 1,2-dihydroxy-5-(methylsulfanyl)pent-1-en-3-one + phosphate. It functions in the pathway amino-acid biosynthesis; L-methionine biosynthesis via salvage pathway; L-methionine from S-methyl-5-thio-alpha-D-ribose 1-phosphate: step 3/6. The protein operates within amino-acid biosynthesis; L-methionine biosynthesis via salvage pathway; L-methionine from S-methyl-5-thio-alpha-D-ribose 1-phosphate: step 4/6. Bifunctional enzyme that catalyzes the enolization of 2,3-diketo-5-methylthiopentyl-1-phosphate (DK-MTP-1-P) into the intermediate 2-hydroxy-3-keto-5-methylthiopentenyl-1-phosphate (HK-MTPenyl-1-P), which is then dephosphorylated to form the acireductone 1,2-dihydroxy-3-keto-5-methylthiopentene (DHK-MTPene). This Persephonella marina (strain DSM 14350 / EX-H1) protein is Enolase-phosphatase E1.